The primary structure comprises 289 residues: Eukaryotic translation initiation factor 3 subunit G (289 aa).

2 disordered regions span residues Met-1–Asn-31 and Asp-151–Met-199. An RRM domain is found at Ala-209 to Lys-287.

This sequence belongs to the eIF-3 subunit G family. Component of the eukaryotic translation initiation factor 3 (eIF-3) complex.

It localises to the cytoplasm. Functionally, RNA-binding component of the eukaryotic translation initiation factor 3 (eIF-3) complex, which is involved in protein synthesis of a specialized repertoire of mRNAs and, together with other initiation factors, stimulates binding of mRNA and methionyl-tRNAi to the 40S ribosome. The eIF-3 complex specifically targets and initiates translation of a subset of mRNAs involved in cell proliferation. This subunit can bind 18S rRNA. The sequence is that of Eukaryotic translation initiation factor 3 subunit G from Coccidioides immitis (strain RS) (Valley fever fungus).